A 571-amino-acid chain; its full sequence is Proline--tRNA ligase (571 aa).

Belongs to the class-II aminoacyl-tRNA synthetase family. ProS type 1 subfamily. Homodimer.

Its subcellular location is the cytoplasm. The enzyme catalyses tRNA(Pro) + L-proline + ATP = L-prolyl-tRNA(Pro) + AMP + diphosphate. Its function is as follows. Catalyzes the attachment of proline to tRNA(Pro) in a two-step reaction: proline is first activated by ATP to form Pro-AMP and then transferred to the acceptor end of tRNA(Pro). As ProRS can inadvertently accommodate and process non-cognate amino acids such as alanine and cysteine, to avoid such errors it has two additional distinct editing activities against alanine. One activity is designated as 'pretransfer' editing and involves the tRNA(Pro)-independent hydrolysis of activated Ala-AMP. The other activity is designated 'posttransfer' editing and involves deacylation of mischarged Ala-tRNA(Pro). The misacylated Cys-tRNA(Pro) is not edited by ProRS. The protein is Proline--tRNA ligase of Pseudomonas aeruginosa (strain LESB58).